Consider the following 688-residue polypeptide: Translation initiation factor IF-2 (688 aa).

Positions 50-62 are enriched in basic and acidic residues; the sequence is LLSGKEKSEKTKE. Residues 50 to 95 are disordered; it reads LLSGKEKSEKTKEEDDEIETTAKNPIKESINNKKSNKRDDKKEKVN. Residues 72 to 82 are compositionally biased toward low complexity; the sequence is KNPIKESINNK. Over residues 86–95 the composition is skewed to basic and acidic residues; it reads KRDDKKEKVN. In terms of domain architecture, tr-type G spans 187-354; sequence KRSPIITVMG…MILLSSEILE (168 aa). The interval 196–203 is G1; that stretch reads GHVDHGKT. 196–203 provides a ligand contact to GTP; that stretch reads GHVDHGKT. Residues 221–225 are G2; that stretch reads GITQH. The segment at 242 to 245 is G3; that stretch reads DTPG. GTP-binding positions include 242 to 246 and 296 to 299; these read DTPGH and NKID. A G4 region spans residues 296–299; it reads NKID. The interval 332 to 334 is G5; that stretch reads SAH.

It belongs to the TRAFAC class translation factor GTPase superfamily. Classic translation factor GTPase family. IF-2 subfamily.

The protein localises to the cytoplasm. Functionally, one of the essential components for the initiation of protein synthesis. Protects formylmethionyl-tRNA from spontaneous hydrolysis and promotes its binding to the 30S ribosomal subunits. Also involved in the hydrolysis of GTP during the formation of the 70S ribosomal complex. This chain is Translation initiation factor IF-2, found in Clostridium botulinum (strain 657 / Type Ba4).